The sequence spans 155 residues: Protein FAM162B (155 aa).

The chain crosses the membrane as a helical span at residues 95–114 (VKACYIMMGLTIFACLVMIV).

This sequence belongs to the UPF0389 family.

The protein resides in the membrane. This is Protein FAM162B (fam162b) from Danio rerio (Zebrafish).